A 382-amino-acid polypeptide reads, in one-letter code: uncharacterized protein (382 aa).

The helical transmembrane segment at 1 to 21 threads the bilayer; it reads MKIILVVFVLIFVGVIGFNMI.

It belongs to the membrane fusion protein (MFP) (TC 8.A.1) family.

It is found in the membrane. This is an uncharacterized protein from Haemophilus influenzae (strain ATCC 51907 / DSM 11121 / KW20 / Rd).